Here is a 369-residue protein sequence, read N- to C-terminus: Serpentine receptor class epsilon-45 (369 aa).

8 consecutive transmembrane segments (helical) span residues 1 to 21, 39 to 59, 67 to 87, 127 to 147, 169 to 191, 195 to 217, 258 to 278, and 291 to 311; these read MIFL…IFIL, FVLT…AIHI, TVLL…NILI, FFLG…TLLV, GLFF…LFFF, HFAV…FTYV, VIHA…FMYL, and IFES…LGSV.

The protein belongs to the nematode receptor-like protein sre family.

It is found in the membrane. The protein is Serpentine receptor class epsilon-45 (sre-45) of Caenorhabditis elegans.